Consider the following 515-residue polypeptide: 1-pyrroline-5-carboxylate dehydrogenase (515 aa).

Active-site residues include glutamate 286 and cysteine 320.

Belongs to the aldehyde dehydrogenase family. RocA subfamily.

The enzyme catalyses L-glutamate 5-semialdehyde + NAD(+) + H2O = L-glutamate + NADH + 2 H(+). Its pathway is amino-acid degradation; L-proline degradation into L-glutamate; L-glutamate from L-proline: step 2/2. The polypeptide is 1-pyrroline-5-carboxylate dehydrogenase (Bacillus cereus (strain ATCC 10987 / NRS 248)).